A 342-amino-acid chain; its full sequence is L-threonine 3-dehydrogenase (342 aa).

Position 38 (C38) interacts with Zn(2+). Catalysis depends on charge relay system residues T40 and H43. Residues H63, E64, C93, C96, C99, and C107 each contribute to the Zn(2+) site. NAD(+) is bound by residues I175, D195, R200, 262 to 264, and 286 to 287; these read LGI and IY.

It belongs to the zinc-containing alcohol dehydrogenase family. As to quaternary structure, homotetramer. It depends on Zn(2+) as a cofactor.

The protein resides in the cytoplasm. The enzyme catalyses L-threonine + NAD(+) = (2S)-2-amino-3-oxobutanoate + NADH + H(+). It participates in amino-acid degradation; L-threonine degradation via oxydo-reductase pathway; glycine from L-threonine: step 1/2. Its function is as follows. Catalyzes the NAD(+)-dependent oxidation of L-threonine to 2-amino-3-ketobutyrate. This chain is L-threonine 3-dehydrogenase, found in Burkholderia ambifaria (strain ATCC BAA-244 / DSM 16087 / CCUG 44356 / LMG 19182 / AMMD) (Burkholderia cepacia (strain AMMD)).